Here is a 372-residue protein sequence, read N- to C-terminus: Cyclin-J (372 aa).

Residues D15–C143 enclose the Cyclin N-terminal domain.

This sequence belongs to the cyclin family.

The protein is Cyclin-J (CCNJ) of Homo sapiens (Human).